The primary structure comprises 784 residues: LPS-assembly protein LptD (784 aa).

Residues 1-24 (MKKRIPTLLATMIATALYSQQGLA) form the signal peptide. 2 disulfide bridges follow: C31–C724 and C173–C725.

This sequence belongs to the LptD family. In terms of assembly, component of the lipopolysaccharide transport and assembly complex. Interacts with LptE and LptA. In terms of processing, contains two intramolecular disulfide bonds.

The protein localises to the cell outer membrane. Its function is as follows. Together with LptE, is involved in the assembly of lipopolysaccharide (LPS) at the surface of the outer membrane. The sequence is that of LPS-assembly protein LptD from Shigella dysenteriae serotype 1 (strain Sd197).